A 573-amino-acid polypeptide reads, in one-letter code: Urease subunit alpha 2 (573 aa).

A Urease domain is found at 136-573; that stretch reads GAIDAHVHLI…LPMAQRYFLF (438 aa). Residues His141, His143, and Lys224 each contribute to the Ni(2+) site. An N6-carboxylysine modification is found at Lys224. His226 is a binding site for substrate. Ni(2+)-binding residues include His253 and His279. His327 (proton donor) is an active-site residue. Asp367 contacts Ni(2+).

This sequence belongs to the metallo-dependent hydrolases superfamily. Urease alpha subunit family. As to quaternary structure, may form a heterohexamer of 3 UreC (alpha) and 3 UreAB (gamma/beta) subunits. May also form a heterotrimer of UreA (gamma), UreB (beta) and UreC (alpha) subunits. Three heterotrimers associate to form the active enzyme. It depends on Ni cation as a cofactor. Carboxylation allows a single lysine to coordinate two nickel ions.

The protein resides in the cytoplasm. The enzyme catalyses urea + 2 H2O + H(+) = hydrogencarbonate + 2 NH4(+). It participates in nitrogen metabolism; urea degradation; CO(2) and NH(3) from urea (urease route): step 1/1. In Streptomyces avermitilis (strain ATCC 31267 / DSM 46492 / JCM 5070 / NBRC 14893 / NCIMB 12804 / NRRL 8165 / MA-4680), this protein is Urease subunit alpha 2.